The chain runs to 461 residues: tRNA modification GTPase MnmE (461 aa).

(6S)-5-formyl-5,6,7,8-tetrahydrofolate is bound by residues lysine 32, glutamate 89, and lysine 128. A TrmE-type G domain is found at 224–387 (GHALSIVGKP…LSQKISAFFP (164 aa)). Asparagine 234 contacts K(+). GTP contacts are provided by residues 234–239 (NAGKSS), 253–259 (SDIKGTT), and 278–281 (DTAG). Serine 238 serves as a coordination point for Mg(2+). K(+) contacts are provided by serine 253, isoleucine 255, and threonine 258. Threonine 259 contacts Mg(2+). A (6S)-5-formyl-5,6,7,8-tetrahydrofolate-binding site is contributed by lysine 461.

The protein belongs to the TRAFAC class TrmE-Era-EngA-EngB-Septin-like GTPase superfamily. TrmE GTPase family. Homodimer. Heterotetramer of two MnmE and two MnmG subunits. It depends on K(+) as a cofactor.

Its subcellular location is the cytoplasm. Exhibits a very high intrinsic GTPase hydrolysis rate. Involved in the addition of a carboxymethylaminomethyl (cmnm) group at the wobble position (U34) of certain tRNAs, forming tRNA-cmnm(5)s(2)U34. This is tRNA modification GTPase MnmE from Helicobacter pylori (strain ATCC 700392 / 26695) (Campylobacter pylori).